We begin with the raw amino-acid sequence, 344 residues long: L-rhamnose-proton symporter (344 aa).

A run of 10 helical transmembrane segments spans residues P4 to A24, W38 to L58, F68 to I88, M101 to L121, T137 to L157, L175 to A195, L214 to I234, L255 to F275, I290 to F310, and L324 to V344.

This sequence belongs to the L-rhamnose transporter (TC 2.A.7.6) family.

It is found in the cell inner membrane. The catalysed reaction is L-rhamnopyranose(in) + H(+)(in) = L-rhamnopyranose(out) + H(+)(out). Functionally, uptake of L-rhamnose across the cytoplasmic membrane with the concomitant transport of protons into the cell (symport system). In Pectobacterium atrosepticum (strain SCRI 1043 / ATCC BAA-672) (Erwinia carotovora subsp. atroseptica), this protein is L-rhamnose-proton symporter.